The primary structure comprises 216 residues: ATP phosphoribosyltransferase (216 aa).

This sequence belongs to the ATP phosphoribosyltransferase family. Short subfamily. Heteromultimer composed of HisG and HisZ subunits.

The protein resides in the cytoplasm. The catalysed reaction is 1-(5-phospho-beta-D-ribosyl)-ATP + diphosphate = 5-phospho-alpha-D-ribose 1-diphosphate + ATP. Its pathway is amino-acid biosynthesis; L-histidine biosynthesis; L-histidine from 5-phospho-alpha-D-ribose 1-diphosphate: step 1/9. In terms of biological role, catalyzes the condensation of ATP and 5-phosphoribose 1-diphosphate to form N'-(5'-phosphoribosyl)-ATP (PR-ATP). Has a crucial role in the pathway because the rate of histidine biosynthesis seems to be controlled primarily by regulation of HisG enzymatic activity. This Chromohalobacter salexigens (strain ATCC BAA-138 / DSM 3043 / CIP 106854 / NCIMB 13768 / 1H11) protein is ATP phosphoribosyltransferase.